The chain runs to 262 residues: ATP synthase subunit a (262 aa).

A run of 6 helical transmembrane segments spans residues 50 to 70, 107 to 127, 141 to 161, 194 to 214, 218 to 238, and 239 to 259; these read TMIM…ACTK, MMPI…LGLI, FGLA…ANGV, LYGN…LINI, VFGG…VGFV, and QAFV…AHEA.

The protein belongs to the ATPase A chain family. In terms of assembly, F-type ATPases have 2 components, CF(1) - the catalytic core - and CF(0) - the membrane proton channel. CF(1) has five subunits: alpha(3), beta(3), gamma(1), delta(1), epsilon(1). CF(0) has three main subunits: a(1), b(2) and c(9-12). The alpha and beta chains form an alternating ring which encloses part of the gamma chain. CF(1) is attached to CF(0) by a central stalk formed by the gamma and epsilon chains, while a peripheral stalk is formed by the delta and b chains.

It is found in the cell membrane. Key component of the proton channel; it plays a direct role in the translocation of protons across the membrane. This Desulforamulus reducens (strain ATCC BAA-1160 / DSM 100696 / MI-1) (Desulfotomaculum reducens) protein is ATP synthase subunit a.